The chain runs to 342 residues: Dihydroorotate dehydrogenase (quinone) (342 aa).

FMN-binding positions include 60–64 and Thr84; that span reads AGLDK. Lys64 contacts substrate. 109–113 serves as a coordination point for substrate; it reads NRMGF. The FMN site is built by Asn137 and Asn170. Asn170 contributes to the substrate binding site. The active-site Nucleophile is the Ser173. Residue Asn175 coordinates substrate. FMN contacts are provided by Lys215 and Thr243. 244–245 contributes to the substrate binding site; sequence NT. FMN is bound by residues Gly266, Gly295, and 316–317; that span reads YS.

It belongs to the dihydroorotate dehydrogenase family. Type 2 subfamily. As to quaternary structure, monomer. FMN serves as cofactor.

Its subcellular location is the cell membrane. It carries out the reaction (S)-dihydroorotate + a quinone = orotate + a quinol. The protein operates within pyrimidine metabolism; UMP biosynthesis via de novo pathway; orotate from (S)-dihydroorotate (quinone route): step 1/1. Catalyzes the conversion of dihydroorotate to orotate with quinone as electron acceptor. The protein is Dihydroorotate dehydrogenase (quinone) of Nitrosomonas europaea (strain ATCC 19718 / CIP 103999 / KCTC 2705 / NBRC 14298).